The chain runs to 158 residues: S-ribosylhomocysteine lyase (158 aa).

Fe cation contacts are provided by H54, H58, and C124.

Belongs to the LuxS family. Homodimer. Fe cation serves as cofactor.

It carries out the reaction S-(5-deoxy-D-ribos-5-yl)-L-homocysteine = (S)-4,5-dihydroxypentane-2,3-dione + L-homocysteine. Its function is as follows. Involved in the synthesis of autoinducer 2 (AI-2) which is secreted by bacteria and is used to communicate both the cell density and the metabolic potential of the environment. The regulation of gene expression in response to changes in cell density is called quorum sensing. Catalyzes the transformation of S-ribosylhomocysteine (RHC) to homocysteine (HC) and 4,5-dihydroxy-2,3-pentadione (DPD). The polypeptide is S-ribosylhomocysteine lyase (Limosilactobacillus reuteri (Lactobacillus reuteri)).